Reading from the N-terminus, the 225-residue chain is Transcriptional activator protein BglJ (225 aa).

The 66-residue stretch at 146 to 211 (YINQSRTLSP…GLLEAADILL (66 aa)) folds into the HTH luxR-type domain. The H-T-H motif DNA-binding region spans 170-189 (MTQIAEQLKRNIKTIRAHKF).

Forms a complex with RcsB; genetically both BglJ and RcsB are required to relieve bgl operon repression by H-NS and by StpA.

Its function is as follows. A crytic transcriptional activator. When its expression is induced it relieves H-NS repression of the bgl operon. Acts independently of transcription factor LeuO. This chain is Transcriptional activator protein BglJ (bglJ), found in Escherichia coli (strain K12).